The chain runs to 1009 residues: Membrane alanyl aminopeptidase (1009 aa).

Residues 1–15 form the signal peptide; the sequence is MAAIKLLVLSLACAC. The propeptide at 16 to 52 is activation peptide; that stretch reads VIAHSPIPPASRTIFLDERLEGGAFENIDAFENIELS. 338 to 342 provides a ligand contact to substrate; sequence GAMEN. His-374 contributes to the Zn(2+) binding site. The active-site Proton acceptor is Glu-375. Zn(2+)-binding residues include His-378 and Glu-397. Asn-906 carries N-linked (GlcNAc...) asparagine glycosylation. A disordered region spans residues 955-980; it reads PSTSTTSTTAAPTTVTQPTITEPSTP. Asp-987 is lipidated: GPI-anchor amidated aspartate. The propeptide at 988–1009 is removed in mature form; that stretch reads SAMTSFASLFIISLGAILHLIL.

The protein belongs to the peptidase M1 family. Zn(2+) is required as a cofactor.

It localises to the cell membrane. Functionally, binds to the B.thuringiensis toxin, CryIA(C). The polypeptide is Membrane alanyl aminopeptidase (Heliothis virescens (Tobacco budworm moth)).